Consider the following 232-residue polypeptide: Ubiquinone biosynthesis O-methyltransferase (232 aa).

Residues Arg36, Gly55, Asp76, and Leu120 each coordinate S-adenosyl-L-methionine.

The protein belongs to the methyltransferase superfamily. UbiG/COQ3 family.

The enzyme catalyses a 3-demethylubiquinol + S-adenosyl-L-methionine = a ubiquinol + S-adenosyl-L-homocysteine + H(+). The catalysed reaction is a 3-(all-trans-polyprenyl)benzene-1,2-diol + S-adenosyl-L-methionine = a 2-methoxy-6-(all-trans-polyprenyl)phenol + S-adenosyl-L-homocysteine + H(+). It participates in cofactor biosynthesis; ubiquinone biosynthesis. O-methyltransferase that catalyzes the 2 O-methylation steps in the ubiquinone biosynthetic pathway. The protein is Ubiquinone biosynthesis O-methyltransferase of Pseudomonas fluorescens (strain SBW25).